Consider the following 180-residue polypeptide: Large ribosomal subunit protein uL6 (180 aa).

The protein belongs to the universal ribosomal protein uL6 family. Part of the 50S ribosomal subunit.

Its function is as follows. This protein binds to the 23S rRNA, and is important in its secondary structure. It is located near the subunit interface in the base of the L7/L12 stalk, and near the tRNA binding site of the peptidyltransferase center. This is Large ribosomal subunit protein uL6 from Desulforapulum autotrophicum (strain ATCC 43914 / DSM 3382 / VKM B-1955 / HRM2) (Desulfobacterium autotrophicum).